A 221-amino-acid chain; its full sequence is Large ribosomal subunit protein uL4 (221 aa).

The segment at 47-77 (GTASTKTRGEVSGGGRKPWIQKHTGRARQGS) is disordered.

It belongs to the universal ribosomal protein uL4 family. As to quaternary structure, part of the 50S ribosomal subunit.

In terms of biological role, one of the primary rRNA binding proteins, this protein initially binds near the 5'-end of the 23S rRNA. It is important during the early stages of 50S assembly. It makes multiple contacts with different domains of the 23S rRNA in the assembled 50S subunit and ribosome. Functionally, forms part of the polypeptide exit tunnel. This Thermosipho melanesiensis (strain DSM 12029 / CIP 104789 / BI429) protein is Large ribosomal subunit protein uL4.